A 244-amino-acid polypeptide reads, in one-letter code: Type III pantothenate kinase (244 aa).

An ATP-binding site is contributed by 9 to 16; sequence DAGNSSLK. Substrate contacts are provided by residues Tyr90 and 97 to 100; that span reads GVDR. Catalysis depends on Asp99, which acts as the Proton acceptor. Position 122 (Thr122) interacts with ATP. Thr172 is a substrate binding site.

It belongs to the type III pantothenate kinase family. Homodimer. It depends on NH4(+) as a cofactor. K(+) is required as a cofactor.

The protein resides in the cytoplasm. The enzyme catalyses (R)-pantothenate + ATP = (R)-4'-phosphopantothenate + ADP + H(+). It functions in the pathway cofactor biosynthesis; coenzyme A biosynthesis; CoA from (R)-pantothenate: step 1/5. Catalyzes the phosphorylation of pantothenate (Pan), the first step in CoA biosynthesis. The protein is Type III pantothenate kinase of Thiobacillus denitrificans (strain ATCC 25259 / T1).